We begin with the raw amino-acid sequence, 202 residues long: MKTFRSMLISLLLVAITTTSGVVEGNYVVYDGEGDQVKPNVPYYISFMTSDYNMWICRKKWRSNDPNSCPQQPLMVTHPNMAAPTPVMFVLSNKSETVVRESAKLKIKFVDPRPCGESGFWRVVQRTSSEGEVVLNGSESTSDNASTFAIEQTNEYYKFTFGDGPDYLTTISLSNDYPIYRLLSKKFSGEMEIYFYKNLTMG.

The first 25 residues, 1–25 (MKTFRSMLISLLLVAITTTSGVVEG), serve as a signal peptide directing secretion. A disulfide bond links cysteine 69 and cysteine 115. N-linked (GlcNAc...) asparagine glycans are attached at residues asparagine 93, asparagine 136, asparagine 144, and asparagine 198.

This sequence belongs to the protease inhibitor I3 (leguminous Kunitz-type inhibitor) family.

Functionally, exhibits Kunitz trypsin protease inhibitor activity. This is Kunitz trypsin inhibitor 7 from Arabidopsis thaliana (Mouse-ear cress).